The following is a 167-amino-acid chain: Large ribosomal subunit protein uL5 (167 aa).

This sequence belongs to the universal ribosomal protein uL5 family. As to quaternary structure, part of the 50S ribosomal subunit; contacts the 5S rRNA and probably tRNA. Forms a bridge to the 30S subunit in the 70S ribosome.

This is one of the proteins that bind and probably mediate the attachment of the 5S RNA into the large ribosomal subunit, where it forms part of the central protuberance. In the 70S ribosome it contacts protein S13 of the 30S subunit (bridge B1b), connecting the 2 subunits; this bridge is implicated in subunit movement. May contact the P site tRNA; the 5S rRNA and some of its associated proteins might help stabilize positioning of ribosome-bound tRNAs. This is Large ribosomal subunit protein uL5 from Methanoculleus marisnigri (strain ATCC 35101 / DSM 1498 / JR1).